The sequence spans 412 residues: Probable tRNA pseudouridine synthase D (412 aa).

Catalysis depends on D97, which acts as the Nucleophile. The TRUD domain occupies 167-370 (ALPNYYGYQR…YGGYRKVVLT (204 aa)).

The protein belongs to the pseudouridine synthase TruD family.

It catalyses the reaction uridine(13) in tRNA = pseudouridine(13) in tRNA. Its function is as follows. Could be responsible for synthesis of pseudouridine from uracil-13 in transfer RNAs. This is Probable tRNA pseudouridine synthase D from Pyrobaculum islandicum (strain DSM 4184 / JCM 9189 / GEO3).